A 251-amino-acid chain; its full sequence is DNA repair protein RecO (251 aa).

Belongs to the RecO family.

Functionally, involved in DNA repair and RecF pathway recombination. In Acetivibrio thermocellus (strain ATCC 27405 / DSM 1237 / JCM 9322 / NBRC 103400 / NCIMB 10682 / NRRL B-4536 / VPI 7372) (Clostridium thermocellum), this protein is DNA repair protein RecO.